A 29-amino-acid polypeptide reads, in one-letter code: Kunitz-type trypsin inhibitor IVTI (29 aa).

The protein belongs to the protease inhibitor I3 (leguminous Kunitz-type inhibitor) family. In terms of assembly, monomer and dimer.

Inhibits bovine trypsin but not chymotrypsin. Also inhibits trypsin-like enzymes from midgut of several lepidopteran species and inhibits larval development in those species. Has fungicidal activity against yeast C.buinensis. Has a bacteriostatic effect against E.coli. Is not cytotoxic. The sequence is that of Kunitz-type trypsin inhibitor IVTI from Inga vera (River koko).